The sequence spans 437 residues: Nuclear envelope integral membrane protein 1 (437 aa).

An N-terminal signal peptide occupies residues 1–44; it reads MAGGIKVSVWSAVGPGPRCWGAGGGGGATWLLLVVAGCVVCGSA. Asparagine 123 carries N-linked (GlcNAc...) asparagine glycosylation. The next 5 membrane-spanning stretches (helical) occupy residues 159–179, 183–203, 214–234, 244–264, and 288–308; these read PKLF…DLLS, IFYY…IVIF, PIYV…QLVF, YWHY…AVCY, and GLMY…VIAL. The segment at 184-295 is a; required for its colocalization with lamins at the nuclear envelope; the sequence is FYYSTGMSVG…GLGLMYSSIQ (112 aa). The tract at residues 334–403 is b; required for interaction with RAN-GTP; that stretch reads PVPPRLLTEE…LTPNEVSVHE (70 aa). The tract at residues 334-437 is required for nuclear localization; it reads PVPPRLLTEE…PTFTQNNFLT (104 aa). Phosphoserine occurs at positions 366, 419, and 420. Residues 415–425 are compositionally biased toward acidic residues; that stretch reads DEELSSEEEGS. Residues 415 to 437 are disordered; it reads DEELSSEEEGSEYPTFTQNNFLT. The segment covering 428-437 has biased composition (polar residues); it reads PTFTQNNFLT.

The protein belongs to the NEMP family. As to quaternary structure, homooligomer. Interacts with RAN-GTP. Interacts with EMD. Post-translationally, phosphorylated. Phosphorylation may regulate its interaction with RAN-GTP. In terms of tissue distribution, in the ovary, expression is strongest in primordial follicle oocytes and rapidly declines as oocytes mature and move from the cortex (at protein level).

It localises to the nucleus inner membrane. Its subcellular location is the nucleus envelope. Together with EMD, contributes to nuclear envelope stiffness in germ cells. Required for female fertility. Essential for normal erythropoiesis. Required for efficient nuclear envelope opening and enucleation during the late stages of erythroblast maturation. This Mus musculus (Mouse) protein is Nuclear envelope integral membrane protein 1 (Nemp1).